The primary structure comprises 109 residues: Small ribosomal subunit protein uS17 (109 aa).

It belongs to the universal ribosomal protein uS17 family. In terms of assembly, part of the 30S ribosomal subunit.

In terms of biological role, one of the primary rRNA binding proteins, it binds specifically to the 5'-end of 16S ribosomal RNA. This Thermoplasma volcanium (strain ATCC 51530 / DSM 4299 / JCM 9571 / NBRC 15438 / GSS1) protein is Small ribosomal subunit protein uS17.